The primary structure comprises 385 residues: Fe-S cluster assembly protein DRE2 (385 aa).

An N-terminal SAM-like domain region spans residues 1–177 (MTSSINILLL…KKLNKNDMTI (177 aa)). Positions 178-240 (NVPQEIDNIT…NDLLKYNNHN (63 aa)) are linker. The disordered stretch occupies residues 200–226 (YFSSDDENSSDGSLSDNANEEEEDDDE). Acidic residues predominate over residues 217 to 226 (ANEEEEDDDE). 4 residues coordinate [2Fe-2S] cluster: Cys261, Cys275, Cys278, and Cys280. The tract at residues 261–280 (CELSLNGGKKRKKACKDCTC) is fe-S binding site A. [4Fe-4S] cluster-binding residues include Cys348, Cys351, Cys359, and Cys362. 2 consecutive short sequence motifs (cx2C motif) follow at residues 348–351 (CGSC) and 359–362 (CDGC). The fe-S binding site B stretch occupies residues 348 to 362 (CGSCALGDAFRCDGC).

Belongs to the anamorsin family. As to quaternary structure, monomer. Interacts with TAH18. Interacts with MIA40. [2Fe-2S] cluster is required as a cofactor. Requires [4Fe-4S] cluster as cofactor.

The protein localises to the cytoplasm. It localises to the mitochondrion intermembrane space. Its function is as follows. Component of the cytosolic iron-sulfur (Fe-S) protein assembly (CIA) machinery required for the maturation of extramitochondrial Fe-S proteins. Part of an electron transfer chain functioning in an early step of cytosolic Fe-S biogenesis, facilitating the de novo assembly of a [4Fe-4S] cluster on the scaffold complex CFD1-NBP35. Electrons are transferred to DRE2 from NADPH via the FAD- and FMN-containing protein TAH18. TAH18-DRE2 are also required for the assembly of the diferric tyrosyl radical cofactor of ribonucleotide reductase (RNR), probably by providing electrons for reduction during radical cofactor maturation in the catalytic small subunit RNR2. The chain is Fe-S cluster assembly protein DRE2 from Candida dubliniensis (strain CD36 / ATCC MYA-646 / CBS 7987 / NCPF 3949 / NRRL Y-17841) (Yeast).